Reading from the N-terminus, the 151-residue chain is Caveolin-3 (151 aa).

At 1–83 (MMTEEHTDLE…RLLSTLLGVP (83 aa)) the chain is on the cytoplasmic side. Lys-38 is covalently cross-linked (Glycyl lysine isopeptide (Lys-Gly) (interchain with G-Cter in SUMO3)). The required for interaction with DAG1 stretch occupies residues 64-114 (TFTVSKYWCYRLLSTLLGVPLALLWGFLFACISFCHIWAVVPCIKSYLIEI). Positions 84 to 104 (LALLWGFLFACISFCHIWAVV) form an intramembrane region, helical. The Cytoplasmic segment spans residues 105 to 151 (PCIKSYLIEIQCISHIYSLCIRTFCNPLFAALGQVCSNIKVVLRREG).

It belongs to the caveolin family. Homooligomer. Interacts with DYSF. Interacts with DLG1 and KCNA5; forms a ternary complex. Interacts with DAG1 (via its C-terminal); the interaction prevents binding of DAG1 with DMD. Interacts with TRIM72. Interacts with MUSK; may regulate MUSK signaling. Interacts with POPDC1. Interacts with CAVIN1, CAVIN2 and CAVIN4. Sumoylation with SUMO3 by PIAS4 may reduce agonist-induced internalization and desensitization of adrenergic receptor ABRD2. As to expression, expressed predominantly in muscle.

It is found in the golgi apparatus membrane. The protein localises to the cell membrane. The protein resides in the membrane. Its subcellular location is the caveola. It localises to the sarcolemma. In terms of biological role, may act as a scaffolding protein within caveolar membranes. Interacts directly with G-protein alpha subunits and can functionally regulate their activity. May also regulate voltage-gated potassium channels. Plays a role in the sarcolemma repair mechanism of both skeletal muscle and cardiomyocytes that permits rapid resealing of membranes disrupted by mechanical stress. Mediates the recruitment of CAVIN2 and CAVIN3 proteins to the caveolae. The chain is Caveolin-3 from Mus musculus (Mouse).